We begin with the raw amino-acid sequence, 603 residues long: MDRGSLLPFQLWCPRPFGTYSQNQPRPPSAALKPSACPEPGGGAEPDHGPAHSENTPPALATEVPASQPAPLLSAAAAGDEGRVLLDTWYVIKPGNTKEKVAFFVAHQCGGGSRASSMKVKGHWGSDSSKAKRRRRCLDPTKAPPDPGGREGPPAAEEGPASAGEDVDLLSVAEMVALVEQRAALALQSYPRPTTPAPVVFVSAEQGGPAKGVGSERRSGGGDCSRVAEAVAHFEAQRDSPPTKGLRKEERPGPGPGEVRIAFRISNGREPRAPDSGLPSGGGGRPGCAYPGSPGPGARAKDKITCDLYQLISPSRDALPSNVEFLLARADEASEGDSPAPARPEDTPPAPPPPPARDCGASGFHVDVVVTGVVDECIFFGKDGTKNVKEETVCLTVSPEEPPPPGQLFFLQNRGPDGPPEPPPADSPATAPGPDDAEGTADTSLCRLYRHVSHDFLEIRFKIQRLLEPRQYMLLLPEHVLVKIFSFLPTRALAALKCTCHHFKGIIEAFGVRATDSRWSRDPLYRDDPCKQCRKRYEKGDVSLCRWHPKPYHHDLPYGRSYWMCCRRADRETPGCRLGLHDNNWVLPCNGPGGGRAGREEGR.

Residues 20 to 63 are disordered; sequence YSQNQPRPPSAALKPSACPEPGGGAEPDHGPAHSENTPPALATE. A phosphoserine; by ATM mark is found at Ser21 and Ser67. Disordered stretches follow at residues 111–163, 235–301, 326–360, and 396–440; these read GGSR…PASA, EAQR…ARAK, LLAR…RDCG, and TVSP…AEGT. Residues 152–163 are compositionally biased toward low complexity; the sequence is GPPAAEEGPASA. Ser338 is subject to Phosphoserine. A Phosphothreonine modification is found at Thr347. Pro residues-rich tracts occupy residues 347-356 and 417-426; these read TPPAPPPPPA and DGPPEPPPAD. The 53-residue stretch at 470-522 folds into the F-box domain; that stretch reads RQYMLLLPEHVLVKIFSFLPTRALAALKCTCHHFKGIIEAFGVRATDSRWSRD.

Part of a SCF (SKP1-cullin-F-box) protein ligase complex SCF(FBXO46) composed of CUL1, SKP1, RBX1 and FBXO46. Phosphorylated by ATM in response to DNA damage, promoting ubiquitination and degradation by the SCF(FBXO31) complex. In terms of processing, ATM-phosphorylated FBXO46 is ubiquitinated and degradaded by the SCF(FBXO31) complex in response to DNA damage.

It functions in the pathway protein modification; protein ubiquitination. Functionally, substrate-recognition component of the SCF(FBXO46) protein ligase complex, which mediates the ubiquitination and degradation of target proteins. In absence of stress, the SCF(FBXO46) complex catalyzes ubiquitination and degradation of MTOR-phosphorylated FBXO31. The polypeptide is F-box only protein 46 (Homo sapiens (Human)).